Here is a 363-residue protein sequence, read N- to C-terminus: Cytochrome b (363 aa).

4 consecutive transmembrane segments (helical) span residues Val24 to Trp44, Phe68 to Phe90, Val105 to Val125, and Leu171 to Phe191. Heme b contacts are provided by His74 and His88. His175 and His189 together coordinate heme b. His194 lines the a ubiquinone pocket. A run of 4 helical transmembrane segments spans residues Phe219 to Phe239, Phe287 to Phe307, Leu321 to Tyr341, and Pro342 to Leu362.

The protein belongs to the cytochrome b family. As to quaternary structure, the main subunits of complex b-c1 are: cytochrome b, cytochrome c1 and the Rieske protein. Requires heme b as cofactor.

It localises to the mitochondrion inner membrane. In terms of biological role, component of the ubiquinol-cytochrome c reductase complex (complex III or cytochrome b-c1 complex) that is part of the mitochondrial respiratory chain. The b-c1 complex mediates electron transfer from ubiquinol to cytochrome c. Contributes to the generation of a proton gradient across the mitochondrial membrane that is then used for ATP synthesis. The polypeptide is Cytochrome b (MT-CYB) (Trypanosoma brucei brucei).